Reading from the N-terminus, the 608-residue chain is Glutamine--fructose-6-phosphate aminotransferase [isomerizing] (608 aa).

C2 acts as the Nucleophile; for GATase activity in catalysis. The 216-residue stretch at C2–D217 folds into the Glutamine amidotransferase type-2 domain. SIS domains are found at residues I284–T424 and I453–P598. K603 serves as the catalytic For Fru-6P isomerization activity.

Homodimer.

It localises to the cytoplasm. The catalysed reaction is D-fructose 6-phosphate + L-glutamine = D-glucosamine 6-phosphate + L-glutamate. Functionally, catalyzes the first step in hexosamine metabolism, converting fructose-6P into glucosamine-6P using glutamine as a nitrogen source. The protein is Glutamine--fructose-6-phosphate aminotransferase [isomerizing] of Clostridium tetani (strain Massachusetts / E88).